We begin with the raw amino-acid sequence, 195 residues long: Urease accessory protein UreG (195 aa).

9-16 (GPVGSGKT) is a binding site for GTP.

Belongs to the SIMIBI class G3E GTPase family. UreG subfamily. Homodimer. UreD, UreF and UreG form a complex that acts as a GTP-hydrolysis-dependent molecular chaperone, activating the urease apoprotein by helping to assemble the nickel containing metallocenter of UreC. The UreE protein probably delivers the nickel.

The protein resides in the cytoplasm. Functionally, facilitates the functional incorporation of the urease nickel metallocenter. This process requires GTP hydrolysis, probably effectuated by UreG. This is Urease accessory protein UreG from Aliarcobacter butzleri (strain RM4018) (Arcobacter butzleri).